Here is a 448-residue protein sequence, read N- to C-terminus: tRNA modification GTPase MnmE (448 aa).

Positions 25, 82, and 121 each coordinate (6S)-5-formyl-5,6,7,8-tetrahydrofolate. The TrmE-type G domain maps to 217 to 372 (GLTTVIAGRP…LRQEIIRRAG (156 aa)). A K(+)-binding site is contributed by N227. GTP is bound by residues 227 to 232 (NVGKSS), 246 to 252 (TEIPGTT), 271 to 274 (DTAG), and 353 to 355 (SAR). A Mg(2+)-binding site is contributed by S231. K(+) contacts are provided by T246, I248, and T251. T252 contributes to the Mg(2+) binding site. K448 lines the (6S)-5-formyl-5,6,7,8-tetrahydrofolate pocket.

It belongs to the TRAFAC class TrmE-Era-EngA-EngB-Septin-like GTPase superfamily. TrmE GTPase family. As to quaternary structure, homodimer. Heterotetramer of two MnmE and two MnmG subunits. K(+) is required as a cofactor.

It is found in the cytoplasm. Exhibits a very high intrinsic GTPase hydrolysis rate. Involved in the addition of a carboxymethylaminomethyl (cmnm) group at the wobble position (U34) of certain tRNAs, forming tRNA-cmnm(5)s(2)U34. This Methylococcus capsulatus (strain ATCC 33009 / NCIMB 11132 / Bath) protein is tRNA modification GTPase MnmE.